A 275-amino-acid chain; its full sequence is Undecaprenyl-diphosphatase (275 aa).

7 helical membrane-spanning segments follow: residues 1 to 21, 41 to 61, 95 to 115, 118 to 138, 192 to 212, 223 to 243, and 255 to 275; these read MTTF…FLPV, ILFL…FVYA, LLII…KDLF, FYNS…LLWT, ATKF…VFEV, FTLT…VFAI, and LYYF…FSLL.

Belongs to the UppP family.

The protein localises to the cell membrane. The enzyme catalyses di-trans,octa-cis-undecaprenyl diphosphate + H2O = di-trans,octa-cis-undecaprenyl phosphate + phosphate + H(+). Catalyzes the dephosphorylation of undecaprenyl diphosphate (UPP). Confers resistance to bacitracin. This Alkaliphilus metalliredigens (strain QYMF) protein is Undecaprenyl-diphosphatase.